Here is a 490-residue protein sequence, read N- to C-terminus: Hippocampus abundant transcript 1 protein (490 aa).

An N-acetylmethionine modification is found at Met1. The Extracellular segment spans residues 1 to 40; sequence MTQGKKKKRAANRSIMLAKKIIIKDGGTPQGIGSPSVYHA. Asn12 carries N-linked (GlcNAc...) asparagine glycosylation. The chain crosses the membrane as a helical span at residues 41–61; the sequence is VIVIFLEFFAWGLLTAPTLVV. Residues 62-74 are Cytoplasmic-facing; the sequence is LHETFPKHTFLMN. Residues 75-95 traverse the membrane as a helical segment; it reads GLIQGVKGLLSFLSAPLIGAL. Over 96–103 the chain is Extracellular; sequence SDVWGRKS. A helical membrane pass occupies residues 104–124; that stretch reads FLLLTVFFTCAPIPLMKISPW. At 125 to 126 the chain is on the cytoplasmic side; that stretch reads WY. A helical transmembrane segment spans residues 127 to 147; sequence FAVISVSGVFAVTFSVVFAYV. Topologically, residues 148-160 are extracellular; sequence ADITQEHERSMAY. A helical membrane pass occupies residues 161-181; that stretch reads GLVSATFAASLVTSPAIGAYL. Topologically, residues 182 to 188 are cytoplasmic; the sequence is GRVYGDS. The helical transmembrane segment at 189–209 threads the bilayer; the sequence is LVVVLATAIALLDICFILVAV. Over 210–243 the chain is Extracellular; that stretch reads PESLPEKMRPASWGAPISWEQADPFASLKKVGQD. A helical transmembrane segment spans residues 244–264; that stretch reads SIVLLICITVFLSYLPEAGQY. The Cytoplasmic portion of the chain corresponds to 265–284; that stretch reads SSFFLYLRQIMKFSPESVAA. Residues 285-305 form a helical membrane-spanning segment; that stretch reads FIAVLGILSIIAQTIVLSLLM. Topologically, residues 306 to 313 are extracellular; it reads RSIGNKNT. The helical transmembrane segment at 314-334 threads the bilayer; the sequence is ILLGLGFQILQLAWYGFGSEP. At 335–337 the chain is on the cytoplasmic side; the sequence is WMM. A helical transmembrane segment spans residues 338-358; sequence WAAGAVAAMSSITFPAVSALV. Residues 359-379 are Extracellular-facing; sequence SRTADADQQGVVQGMITGIRG. Residues 380 to 400 form a helical membrane-spanning segment; sequence LCNGLGPALYGFIFYIFHVEL. Residues 401-427 are Cytoplasmic-facing; it reads KELPITGTDLGTNTSPQHHFEQNSIIP. Residues 428 to 448 traverse the membrane as a helical segment; the sequence is GPPFLFGACSVLLALLVALFI. The Extracellular segment spans residues 449–490; it reads PEHTNLSLRSSSWRKHCGSHSHPHNTQAPGEAKEPLLQDTNV. The N-linked (GlcNAc...) asparagine glycan is linked to Asn453. Positions 465–490 are disordered; the sequence is CGSHSHPHNTQAPGEAKEPLLQDTNV.

This sequence belongs to the major facilitator superfamily.

Its subcellular location is the membrane. This is Hippocampus abundant transcript 1 protein from Homo sapiens (Human).